A 391-amino-acid chain; its full sequence is Protein NirF (391 aa).

It is found in the cytoplasm. Required for the biosynthesis of heme d1 of nitrite reductase. Could have a dehydrogenase activity yielding sirohydrochlorin from precorrin-2 or dehydrogenation of propionate side chain C17. The sequence is that of Protein NirF (nirF) from Stutzerimonas stutzeri (Pseudomonas stutzeri).